The chain runs to 226 residues: MNSIEFPLRDRTTQNSVISTTLNELSNWSRLSSLWPLLYGTSCCFIEFASLIGSRFDFDRYGLVPRSSPRQADLILTAGTVTMKMAPSLVRLYEQMPEPKYVIAIGACTITGGMFSTDSYSTVRGVDKLIPVDVYLPGCPPKPEAVIDAITKLRKKISREIYEKQIRSQRENKNRFFTTNHKFHVGRSTQTGNYDQGFFFQPPSTSEISLTHFSNIKKRVQYPPTK.

[4Fe-4S] cluster contacts are provided by C43, C44, C108, and C139.

The protein belongs to the complex I 20 kDa subunit family. As to quaternary structure, NDH is composed of at least 16 different subunits, 5 of which are encoded in the nucleus. [4Fe-4S] cluster is required as a cofactor.

It is found in the plastid. It localises to the chloroplast thylakoid membrane. It carries out the reaction a plastoquinone + NADH + (n+1) H(+)(in) = a plastoquinol + NAD(+) + n H(+)(out). It catalyses the reaction a plastoquinone + NADPH + (n+1) H(+)(in) = a plastoquinol + NADP(+) + n H(+)(out). NDH shuttles electrons from NAD(P)H:plastoquinone, via FMN and iron-sulfur (Fe-S) centers, to quinones in the photosynthetic chain and possibly in a chloroplast respiratory chain. The immediate electron acceptor for the enzyme in this species is believed to be plastoquinone. Couples the redox reaction to proton translocation, and thus conserves the redox energy in a proton gradient. In Lupinus luteus (European yellow lupine), this protein is NAD(P)H-quinone oxidoreductase subunit K, chloroplastic.